The primary structure comprises 284 residues: Nucleoid occlusion protein (284 aa).

The H-T-H motif DNA-binding region spans 143–162 (EALAQRVGKSQSAIANKMRL).

Belongs to the ParB family.

The protein resides in the cytoplasm. It is found in the nucleoid. In terms of biological role, effects nucleoid occlusion by binding relatively nonspecifically to DNA and preventing the assembly of the division machinery in the vicinity of the nucleoid, especially under conditions that disturb the cell cycle. It helps to coordinate cell division and chromosome segregation by preventing the formation of the Z ring through the nucleoid, which would cause chromosome breakage. The chain is Nucleoid occlusion protein from Listeria monocytogenes serotype 4b (strain CLIP80459).